A 77-amino-acid polypeptide reads, in one-letter code: Small ribosomal subunit protein bS18 (77 aa).

The protein belongs to the bacterial ribosomal protein bS18 family. In terms of assembly, part of the 30S ribosomal subunit. Forms a tight heterodimer with protein bS6.

Binds as a heterodimer with protein bS6 to the central domain of the 16S rRNA, where it helps stabilize the platform of the 30S subunit. The polypeptide is Small ribosomal subunit protein bS18 (Shouchella clausii (strain KSM-K16) (Alkalihalobacillus clausii)).